The sequence spans 165 residues: Large ribosomal subunit protein uL10 (165 aa).

Belongs to the universal ribosomal protein uL10 family. In terms of assembly, part of the ribosomal stalk of the 50S ribosomal subunit. The N-terminus interacts with L11 and the large rRNA to form the base of the stalk. The C-terminus forms an elongated spine to which L12 dimers bind in a sequential fashion forming a multimeric L10(L12)X complex.

Functionally, forms part of the ribosomal stalk, playing a central role in the interaction of the ribosome with GTP-bound translation factors. This Borrelia turicatae (strain 91E135) protein is Large ribosomal subunit protein uL10.